A 151-amino-acid polypeptide reads, in one-letter code: FAD synthase (151 aa).

ATP is bound by residues 9–10 (TF), 14–17 (HPGH), aspartate 96, and tyrosine 123.

This sequence belongs to the archaeal FAD synthase family. In terms of assembly, homodimer. Requires a divalent metal cation as cofactor.

It carries out the reaction FMN + ATP + H(+) = FAD + diphosphate. It functions in the pathway cofactor biosynthesis; FAD biosynthesis; FAD from FMN: step 1/1. Its function is as follows. Catalyzes the transfer of the AMP portion of ATP to flavin mononucleotide (FMN) to produce flavin adenine dinucleotide (FAD) coenzyme. This chain is FAD synthase, found in Methanothermobacter thermautotrophicus (strain ATCC 29096 / DSM 1053 / JCM 10044 / NBRC 100330 / Delta H) (Methanobacterium thermoautotrophicum).